Here is a 250-residue protein sequence, read N- to C-terminus: Galectin-3 (250 aa).

Residues M1 to P60 are disordered. Position 2 is an N-acetylalanine (A2). Phosphoserine occurs at positions 6 and 12. 3 repeat units span residues Y36 to A44, Y45 to A53, and Y54 to A62. Positions Y36–A109 are 8 X 9 AA tandem repeats of Y-P-G-X(3)-P-G-A. The segment covering G38–G47 has biased composition (low complexity). Residues Q48–P60 show a composition bias toward pro residues. The stretch at Y63–A69 is one 4; approximate repeat. Copy 5 of the repeat occupies Y70 to V78. Residues Y79–A88 form a 6; approximate repeat. The 7; approximate repeat unit spans residues Y89–A100. One copy of the 8; approximate repeat lies at Y101–A109. One can recognise a Galectin domain in the interval Y118–T248. An a beta-D-galactoside-binding site is contributed by W181–Q187. Residue S188 is modified to Phosphoserine. The short motif at K226 to D241 is the Nuclear export signal element.

As to quaternary structure, probably forms homo- or heterodimers. Interacts with DMBT1. Interacts with CD6 and ALCAM. Forms a complex with the ITGA3, ITGB1 and CSPG4. Interacts with LGALS3BP, LYPD3, ZFTRAF1 and UACA. Interacts with TRIM16; this interaction mediates autophagy of damage endomembranes. Interacts with cargo receptor TMED10; the interaction mediates the translocation from the cytoplasm into the ERGIC (endoplasmic reticulum-Golgi intermediate compartment) and thereby secretion. In terms of tissue distribution, a major expression is found in the colonic epithelium. It is also abundant in the activated macrophages. Expressed in fetal membranes.

The protein resides in the cytoplasm. Its subcellular location is the nucleus. It is found in the secreted. Its function is as follows. Galactose-specific lectin which binds IgE. May mediate with the alpha-3, beta-1 integrin the stimulation by CSPG4 of endothelial cells migration. Together with DMBT1, required for terminal differentiation of columnar epithelial cells during early embryogenesis. In the nucleus: acts as a pre-mRNA splicing factor. Involved in acute inflammatory responses including neutrophil activation and adhesion, chemoattraction of monocytes macrophages, opsonization of apoptotic neutrophils, and activation of mast cells. Together with TRIM16, coordinates the recognition of membrane damage with mobilization of the core autophagy regulators ATG16L1 and BECN1 in response to damaged endomembranes. The protein is Galectin-3 of Homo sapiens (Human).